The following is a 536-amino-acid chain: Cytoplasmic dynein 2 intermediate chain 2 (536 aa).

Residue S15 is modified to Phosphoserine. The interval 80–93 is DYNLL2 binding; sequence RNHVDAQVQTEAPV. Residues 106–131 are DYNLRB1 binding; it reads PRLAAFLRRVEAMVIRELNKNWQSHA. WD repeat units lie at residues 215 to 255, 264 to 308, 390 to 430, 433 to 473, and 480 to 520; these read EVPS…DPLL, THTD…QLQL, PHGG…PLTS, LSLK…QKPT, and QDES…TEQG.

It belongs to the dynein light intermediate chain family. As to quaternary structure, the cytoplasmic dynein 2 complex consists of two catalytic heavy chains (HCs) and a number of non-catalytic subunits presented by intermediate chains (ICs), light intermediate chains (LICs) and light chains (LCs). Among them, a heavy chain (DYNC2H1), two intermediate chains (DYNC2I2 and DYNC2I1), a light intermediate chain (DYNC2LI1), and a light chain (DYNLT2B) are unique to the cytoplasmic dynein complex 2, but a subset of the light chains are also shared by dynein-1 and dynein-2 complexes. Interacts with DYNC2I1; their C-terminal domains each bind a copy of the heavy chain, and their extended N-terminal regions are held together by an array of light chain dimers. Interacts with DYNLL2; this interaction is essential for dynein-2-mediated retrograde trafficking of ciliary proteins. Interacts with DYNLRB1; this interaction is essential for dynein-2-mediated retrograde trafficking of ciliary proteins. Interacts (via the WD domains) with MAP3K7 and TAB3. Interacts (via WD domains) with TAB2 (via C-terminus). Interacts (via WD domains) with TRAF6 (via TRAF-type domains). Expressed in several cell lines (at protein level).

The protein resides in the cytoplasm. It is found in the cytoskeleton. Its subcellular location is the cilium basal body. It localises to the cilium axoneme. The protein localises to the microtubule organizing center. The protein resides in the centrosome. It is found in the cell projection. Its subcellular location is the cilium. It localises to the filopodium. In terms of biological role, acts as one of several non-catalytic accessory components of the cytoplasmic dynein 2 complex (dynein-2 complex), a motor protein complex that drives the movement of cargos along microtubules within cilia and flagella in concert with the intraflagellar transport (IFT) system. DYNC2I2 plays a major role in retrograde ciliary protein trafficking and in ciliogenesis. Required also to maintain a functional transition zone. Its function is as follows. Acts as a negative regulator of the Toll-like and IL-1R receptor signaling pathways. Inhibits the MAP3K7-induced NF-kappa-B activation pathway. Inhibits MAP3K7 phosphorylation at 'Thr-184' and 'Thr-187' upon Il-1 beta stimulation. The chain is Cytoplasmic dynein 2 intermediate chain 2 from Homo sapiens (Human).